Reading from the N-terminus, the 704-residue chain is Polyribonucleotide nucleotidyltransferase (704 aa).

2 residues coordinate Mg(2+): Asp-486 and Asp-492. The 60-residue stretch at 553–612 folds into the KH domain; that stretch reads PKIVIVKINPDKIRDVIGPGGKQINKIIEETGVKIDTEQDGTIYISSANEEMNARAKQII. In terms of domain architecture, S1 motif spans 622-690; that stretch reads GEYYLSTVKR…KQGRVNLSRK (69 aa).

Belongs to the polyribonucleotide nucleotidyltransferase family. It depends on Mg(2+) as a cofactor.

The protein resides in the cytoplasm. The catalysed reaction is RNA(n+1) + phosphate = RNA(n) + a ribonucleoside 5'-diphosphate. Functionally, involved in mRNA degradation. Catalyzes the phosphorolysis of single-stranded polyribonucleotides processively in the 3'- to 5'-direction. This Lysinibacillus sphaericus (strain C3-41) protein is Polyribonucleotide nucleotidyltransferase.